The primary structure comprises 208 residues: Small ribosomal subunit protein uS4 (208 aa).

Residues 98 to 163 enclose the S4 RNA-binding domain; the sequence is QRLDNVVYRM…NPQITRAIEL (66 aa).

It belongs to the universal ribosomal protein uS4 family. In terms of assembly, part of the 30S ribosomal subunit. Contacts protein S5. The interaction surface between S4 and S5 is involved in control of translational fidelity.

One of the primary rRNA binding proteins, it binds directly to 16S rRNA where it nucleates assembly of the body of the 30S subunit. Its function is as follows. With S5 and S12 plays an important role in translational accuracy. The chain is Small ribosomal subunit protein uS4 from Campylobacter jejuni (strain RM1221).